The sequence spans 179 residues: Large ribosomal subunit protein uL6 (179 aa).

This sequence belongs to the universal ribosomal protein uL6 family. In terms of assembly, part of the 50S ribosomal subunit.

Its function is as follows. This protein binds to the 23S rRNA, and is important in its secondary structure. It is located near the subunit interface in the base of the L7/L12 stalk, and near the tRNA binding site of the peptidyltransferase center. This Geotalea daltonii (strain DSM 22248 / JCM 15807 / FRC-32) (Geobacter daltonii) protein is Large ribosomal subunit protein uL6.